The sequence spans 85 residues: UPF0386 protein Bind_1628 (85 aa).

Belongs to the UPF0386 family.

The polypeptide is UPF0386 protein Bind_1628 (Beijerinckia indica subsp. indica (strain ATCC 9039 / DSM 1715 / NCIMB 8712)).